Reading from the N-terminus, the 75-residue chain is MAKLSFTFCFLLFLLLSSIAAGSRPLEGARVGVKVRGLSPSIEATSPTVEDDQAAGSHGKSPERLSPGGPDPQHH.

An N-terminal signal peptide occupies residues 1 to 22 (MAKLSFTFCFLLFLLLSSIAAG). A disordered region spans residues 40-75 (PSIEATSPTVEDDQAAGSHGKSPERLSPGGPDPQHH). Hydroxyproline occurs at positions 67 and 70. The O-linked (Ara...) hydroxyproline glycan is linked to P70.

It belongs to the CLV3/ESR signal peptide family. Interacts with the extracellular leucine-rich repeat region of CLV1. In terms of processing, the O-glycosylation (arabinosylation) of the hydroxyproline Pro-70 enhances binding affinity of the CLE2p peptide for its receptor. As to expression, mostly expressed in roots and seedlings, and, to a lower extent, in apex.

The protein resides in the secreted. It localises to the extracellular space. Functionally, extracellular signal peptide that regulates cell fate. May act with CLV1 as a ligand-receptor pair in a signal transduction pathway, coordinating growth between adjacent meristematic regions. The sequence is that of CLAVATA3/ESR (CLE)-related protein 2 from Arabidopsis thaliana (Mouse-ear cress).